Consider the following 324-residue polypeptide: Ribose-phosphate pyrophosphokinase (324 aa).

Residues 45–47 and 104–105 each bind ATP; these read NGE and RQ. Mg(2+) is bound by residues histidine 138 and aspartate 178. Residue lysine 201 is part of the active site. Residues arginine 203, aspartate 229, and 233-237 contribute to the D-ribose 5-phosphate site; that span reads DTGGT.

The protein belongs to the ribose-phosphate pyrophosphokinase family. Class I subfamily. Homohexamer. The cofactor is Mg(2+).

It localises to the cytoplasm. It catalyses the reaction D-ribose 5-phosphate + ATP = 5-phospho-alpha-D-ribose 1-diphosphate + AMP + H(+). Its pathway is metabolic intermediate biosynthesis; 5-phospho-alpha-D-ribose 1-diphosphate biosynthesis; 5-phospho-alpha-D-ribose 1-diphosphate from D-ribose 5-phosphate (route I): step 1/1. Functionally, involved in the biosynthesis of the central metabolite phospho-alpha-D-ribosyl-1-pyrophosphate (PRPP) via the transfer of pyrophosphoryl group from ATP to 1-hydroxyl of ribose-5-phosphate (Rib-5-P). The chain is Ribose-phosphate pyrophosphokinase from Streptomyces coelicolor (strain ATCC BAA-471 / A3(2) / M145).